The sequence spans 476 residues: Angiotensinogen (476 aa).

The N-terminal stretch at 1-24 (MAPAGVSLRATILCLVAWAGLAAG) is a signal peptide. N38, N161, N295, and N319 each carry an N-linked (GlcNAc...) asparagine glycan. C42 and C162 are oxidised to a cystine.

Belongs to the serpin family. In terms of processing, in response to low blood pressure, the enzyme renin/REN cleaves angiotensinogen to produce angiotensin-1. Angiotensin-1 is a substrate of ACE (angiotensin converting enzyme) that removes a dipeptide to yield the physiologically active peptide angiotensin-2. Angiotensin-1 and angiotensin-2 can be further processed to generate angiotensin-3, angiotensin-4. Angiotensin 1-9 is cleaved from angiotensin-1 by ACE2 and can be further processed by ACE to produce angiotensin 1-7, angiotensin 1-5 and angiotensin 1-4. Angiotensin 1-7 has also been proposed to be cleaved from angiotensin-2 by ACE2 or from angiotensin-1 by MME (neprilysin). The disulfide bond is labile. Angiotensinogen is present in the circulation in a near 40:60 ratio with the oxidized disulfide-bonded form, which preferentially interacts with receptor-bound renin.

It is found in the secreted. Its function is as follows. Essential component of the renin-angiotensin system (RAS), a potent regulator of blood pressure, body fluid and electrolyte homeostasis. Acts directly on vascular smooth muscle as a potent vasoconstrictor, affects cardiac contractility and heart rate through its action on the sympathetic nervous system, and alters renal sodium and water absorption through its ability to stimulate the zona glomerulosa cells of the adrenal cortex to synthesize and secrete aldosterone. Acts by binding to angiotensin receptors AGTR1 and AGTR2. Also binds the DEAR/FBXW7-AS1 receptor. In terms of biological role, stimulates aldosterone release. Functionally, is a ligand for the G-protein coupled receptor MAS1. Has vasodilator and antidiuretic effects. Has an antithrombotic effect that involves MAS1-mediated release of nitric oxide from platelets. This chain is Angiotensinogen (AGT), found in Pan troglodytes (Chimpanzee).